The primary structure comprises 255 residues: uncharacterized protein (255 aa).

The protein belongs to the IIV-6 155L family.

This is an uncharacterized protein from Acheta domesticus (House cricket).